The sequence spans 368 residues: Meiotic driver wtf23 (368 aa).

The segment at 1-98 is disordered; sequence MKNKYYPLRS…SSGTADNSST (98 aa). Over residues 11–29 the composition is skewed to basic and acidic residues; sequence SMDELSAKNDNEIDLEKGP. Composition is skewed to polar residues over residues 57–72 and 89–98; these read GANN…STTP and SSGTADNSST. Transmembrane regions (helical) follow at residues 105–124, 139–158, 170–192, 202–221, 234–256, 266–283, and 328–350; these read FLSF…YLTY, YFGV…WYFY, IFLA…VISI, MIII…GCVK, STCT…FWTF, VFLL…TMFL, and GIAF…FRGG.

Belongs to the WTF family. As to quaternary structure, homomer. Forms protein aggregates. The two isoforms can interact with each other and with themselves. High sequence similarity is required for their interaction.

The protein resides in the spore membrane. It is found in the vacuole membrane. It localises to the ascus epiplasm. Its subcellular location is the cytoplasm. The protein localises to the endoplasmic reticulum membrane. Functionally, promotes unequal transmission of alleles from the parental zygote to progeny spores by acting as poison/antidote system where the poison and antidote proteins are produced from the same locus; the poison component is trans-acting and targets all spores within an ascus whereas the antidote component is spore-specific, leading to poisoning of all progeny that do not inherit the allele. Its function is as follows. Localizes isoform 2 to the vacuole thereby facilitating its degradation. In terms of biological role, forms toxic aggregates that disrupt spore maturation. The chain is Meiotic driver wtf23 from Schizosaccharomyces pombe (strain 972 / ATCC 24843) (Fission yeast).